The primary structure comprises 140 residues: UPF0102 protein Ppro_1186 (140 aa).

The disordered stretch occupies residues 1 to 27 (MKRPGDGRQESPSSTARPDNRNTGSRG). A compositionally biased stretch (polar residues) spans 10 to 25 (ESPSSTARPDNRNTGS).

It belongs to the UPF0102 family.

This chain is UPF0102 protein Ppro_1186, found in Pelobacter propionicus (strain DSM 2379 / NBRC 103807 / OttBd1).